We begin with the raw amino-acid sequence, 161 residues long: 3-isopropylmalate dehydratase small subunit (161 aa).

Belongs to the LeuD family. LeuD type 2 subfamily. In terms of assembly, heterodimer of LeuC and LeuD.

The catalysed reaction is (2R,3S)-3-isopropylmalate = (2S)-2-isopropylmalate. The protein operates within amino-acid biosynthesis; L-leucine biosynthesis; L-leucine from 3-methyl-2-oxobutanoate: step 2/4. Its function is as follows. Catalyzes the isomerization between 2-isopropylmalate and 3-isopropylmalate, via the formation of 2-isopropylmaleate. In Sulfolobus acidocaldarius (strain ATCC 33909 / DSM 639 / JCM 8929 / NBRC 15157 / NCIMB 11770), this protein is 3-isopropylmalate dehydratase small subunit.